We begin with the raw amino-acid sequence, 411 residues long: Tyrosine--tRNA ligase (411 aa).

An L-tyrosine-binding site is contributed by Y33. Residues 38 to 47 (PTADSLHLGN) carry the 'HIGH' region motif. Positions 160 and 164 each coordinate L-tyrosine. Positions 222 to 226 (KFGKS) match the 'KMSKS' region motif. Residue K225 coordinates ATP. An S4 RNA-binding domain is found at 346-410 (VNLVNFLVEN…GKKKILICKV (65 aa)).

Belongs to the class-I aminoacyl-tRNA synthetase family. TyrS type 1 subfamily. As to quaternary structure, homodimer.

The protein localises to the cytoplasm. It catalyses the reaction tRNA(Tyr) + L-tyrosine + ATP = L-tyrosyl-tRNA(Tyr) + AMP + diphosphate + H(+). Its function is as follows. Catalyzes the attachment of tyrosine to tRNA(Tyr) in a two-step reaction: tyrosine is first activated by ATP to form Tyr-AMP and then transferred to the acceptor end of tRNA(Tyr). This is Tyrosine--tRNA ligase from Mycoplasmopsis synoviae (strain 53) (Mycoplasma synoviae).